The primary structure comprises 359 residues: Probable dual-specificity RNA methyltransferase RlmN (359 aa).

E91 functions as the Proton acceptor in the catalytic mechanism. In terms of domain architecture, Radical SAM core spans 97–329; that stretch reads QHYGHSVCVT…KKNGVNCVVR (233 aa). C104 and C340 are disulfide-bonded. 3 residues coordinate [4Fe-4S] cluster: C111, C115, and C118. S-adenosyl-L-methionine is bound by residues 163–164, S195, 218–220, and N296; these read GE and SLH. C340 (S-methylcysteine intermediate) is an active-site residue.

It belongs to the radical SAM superfamily. RlmN family. [4Fe-4S] cluster is required as a cofactor.

The protein resides in the cytoplasm. It catalyses the reaction adenosine(2503) in 23S rRNA + 2 reduced [2Fe-2S]-[ferredoxin] + 2 S-adenosyl-L-methionine = 2-methyladenosine(2503) in 23S rRNA + 5'-deoxyadenosine + L-methionine + 2 oxidized [2Fe-2S]-[ferredoxin] + S-adenosyl-L-homocysteine. The catalysed reaction is adenosine(37) in tRNA + 2 reduced [2Fe-2S]-[ferredoxin] + 2 S-adenosyl-L-methionine = 2-methyladenosine(37) in tRNA + 5'-deoxyadenosine + L-methionine + 2 oxidized [2Fe-2S]-[ferredoxin] + S-adenosyl-L-homocysteine. Its function is as follows. Specifically methylates position 2 of adenine 2503 in 23S rRNA and position 2 of adenine 37 in tRNAs. This chain is Probable dual-specificity RNA methyltransferase RlmN, found in Streptococcus pyogenes serotype M2 (strain MGAS10270).